Here is a 203-residue protein sequence, read N- to C-terminus: Pyridoxal 5'-phosphate synthase subunit PdxT (203 aa).

54–56 provides a ligand contact to L-glutamine; it reads GES. The active-site Nucleophile is Cys86. L-glutamine contacts are provided by residues Arg113 and 141-142; that span reads IR. Residues His177 and Glu179 each act as charge relay system in the active site.

This sequence belongs to the glutaminase PdxT/SNO family. As to quaternary structure, in the presence of PdxS, forms a dodecamer of heterodimers. Only shows activity in the heterodimer.

It catalyses the reaction aldehydo-D-ribose 5-phosphate + D-glyceraldehyde 3-phosphate + L-glutamine = pyridoxal 5'-phosphate + L-glutamate + phosphate + 3 H2O + H(+). The enzyme catalyses L-glutamine + H2O = L-glutamate + NH4(+). It participates in cofactor biosynthesis; pyridoxal 5'-phosphate biosynthesis. Functionally, catalyzes the hydrolysis of glutamine to glutamate and ammonia as part of the biosynthesis of pyridoxal 5'-phosphate. The resulting ammonia molecule is channeled to the active site of PdxS. The polypeptide is Pyridoxal 5'-phosphate synthase subunit PdxT (Halobacterium salinarum (strain ATCC 29341 / DSM 671 / R1)).